The sequence spans 129 residues: Large ribosomal subunit protein bL17 (129 aa).

It belongs to the bacterial ribosomal protein bL17 family. Part of the 50S ribosomal subunit. Contacts protein L32.

This Hahella chejuensis (strain KCTC 2396) protein is Large ribosomal subunit protein bL17.